A 189-amino-acid chain; its full sequence is Peptide deformylase (189 aa).

Residues C98 and H140 each coordinate Fe cation. E141 is a catalytic residue. H144 is a Fe cation binding site.

This sequence belongs to the polypeptide deformylase family. It depends on Fe(2+) as a cofactor.

The enzyme catalyses N-terminal N-formyl-L-methionyl-[peptide] + H2O = N-terminal L-methionyl-[peptide] + formate. Removes the formyl group from the N-terminal Met of newly synthesized proteins. Requires at least a dipeptide for an efficient rate of reaction. N-terminal L-methionine is a prerequisite for activity but the enzyme has broad specificity at other positions. The protein is Peptide deformylase of Porphyromonas gingivalis (strain ATCC 33277 / DSM 20709 / CIP 103683 / JCM 12257 / NCTC 11834 / 2561).